We begin with the raw amino-acid sequence, 215 residues long: Transmembrane protein 267 (215 aa).

3 consecutive transmembrane segments (helical) span residues 77 to 97, 114 to 134, and 178 to 198; these read FGEI…HFLL, FLHC…TMHF, and FWLY…VMYF.

Its subcellular location is the membrane. The chain is Transmembrane protein 267 (TMEM267) from Bos taurus (Bovine).